Reading from the N-terminus, the 323-residue chain is HPr kinase/phosphorylase (323 aa).

Catalysis depends on residues H146 and K167. 161–168 provides a ligand contact to ATP; that stretch reads GESGLGKS. S168 serves as a coordination point for Mg(2+). Residue D185 is the Proton acceptor; for phosphorylation activity. Proton donor; for dephosphorylation activity of the active site. An important for the catalytic mechanism of both phosphorylation and dephosphorylation region spans residues 209-218; that stretch reads LEVRGLGLLD. E210 is a binding site for Mg(2+). The active site involves R250. The interval 271–276 is important for the catalytic mechanism of dephosphorylation; it reads QVAAGR.

It belongs to the HPrK/P family. As to quaternary structure, homohexamer. Requires Mg(2+) as cofactor.

The catalysed reaction is [HPr protein]-L-serine + ATP = [HPr protein]-O-phospho-L-serine + ADP + H(+). It carries out the reaction [HPr protein]-O-phospho-L-serine + phosphate + H(+) = [HPr protein]-L-serine + diphosphate. Catalyzes the ATP- as well as the pyrophosphate-dependent phosphorylation of a specific serine residue in HPr, a phosphocarrier protein of the phosphoenolpyruvate-dependent sugar phosphotransferase system (PTS). HprK/P also catalyzes the pyrophosphate-producing, inorganic phosphate-dependent dephosphorylation (phosphorolysis) of seryl-phosphorylated HPr (P-Ser-HPr). The protein is HPr kinase/phosphorylase of Cupriavidus metallidurans (strain ATCC 43123 / DSM 2839 / NBRC 102507 / CH34) (Ralstonia metallidurans).